A 613-amino-acid polypeptide reads, in one-letter code: Thymidine kinase (613 aa).

Disordered regions lie at residues 1–233 and 253–276; these read MAEG…GVKS and SDGE…ATPR. Over residues 8-18 the composition is skewed to low complexity; sequence FSSSSTSSEEA. Residues 78–88 are compositionally biased toward basic and acidic residues; sequence PKNEPRPERGK. Residues 114–126 are compositionally biased toward basic residues; that stretch reads LGSRTRSKSRSRD. Basic and acidic residues predominate over residues 199 to 218; that stretch reads HRYDKPSYDEEVCQKKDKGG. 301–308 is an ATP binding site; the sequence is GSMGVGKT. The active-site Proton acceptor is the Glu-327. Substrate is bound by residues Tyr-344, Gln-365, and Arg-461.

The protein belongs to the herpesviridae thymidine kinase family. In terms of assembly, homodimer.

It catalyses the reaction thymidine + ATP = dTMP + ADP + H(+). Its function is as follows. Catalyzes the transfer of the gamma-phospho group of ATP to thymidine to generate dTMP in the salvage pathway of pyrimidine synthesis. The dTMP serves as a substrate for DNA polymerase during viral DNA replication. Allows the virus to be reactivated and to grow in non-proliferative cells lacking a high concentration of phosphorylated nucleic acid precursors. This chain is Thymidine kinase, found in Equine herpesvirus 2 (strain 86/87) (EHV-2).